The sequence spans 274 residues: Bis(5'-nucleosyl)-tetraphosphatase, symmetrical (274 aa).

Belongs to the Ap4A hydrolase family.

The enzyme catalyses P(1),P(4)-bis(5'-adenosyl) tetraphosphate + H2O = 2 ADP + 2 H(+). In terms of biological role, hydrolyzes diadenosine 5',5'''-P1,P4-tetraphosphate to yield ADP. The protein is Bis(5'-nucleosyl)-tetraphosphatase, symmetrical of Shewanella loihica (strain ATCC BAA-1088 / PV-4).